Here is a 279-residue protein sequence, read N- to C-terminus: Oxygen-dependent coproporphyrinogen-III oxidase (279 aa).

Serine 102 serves as a coordination point for substrate. Positions 106 and 116 each coordinate a divalent metal cation. The active-site Proton donor is the histidine 116. Asparagine 118 to arginine 120 provides a ligand contact to substrate. Histidine 149 and histidine 179 together coordinate a divalent metal cation. Residues tyrosine 244–alanine 279 are important for dimerization.

Belongs to the aerobic coproporphyrinogen-III oxidase family. As to quaternary structure, homodimer. It depends on a divalent metal cation as a cofactor.

The protein localises to the cytoplasm. It carries out the reaction coproporphyrinogen III + O2 + 2 H(+) = protoporphyrinogen IX + 2 CO2 + 2 H2O. Its pathway is porphyrin-containing compound metabolism; protoporphyrin-IX biosynthesis; protoporphyrinogen-IX from coproporphyrinogen-III (O2 route): step 1/1. Its function is as follows. Involved in the heme biosynthesis. Catalyzes the aerobic oxidative decarboxylation of propionate groups of rings A and B of coproporphyrinogen-III to yield the vinyl groups in protoporphyrinogen-IX. In Rickettsia bellii (strain RML369-C), this protein is Oxygen-dependent coproporphyrinogen-III oxidase.